Here is a 617-residue protein sequence, read N- to C-terminus: Arrestin domain-containing protein B (617 aa).

Positions 1-109 (MDNRGLRLFI…ATFGQTDKWL (109 aa)) constitute a C2 domain. The Ca(2+) site is built by D20, D27, D76, D78, and D84.

This sequence belongs to the arrestin family. The cofactor is Ca(2+).

The protein is Arrestin domain-containing protein B (adcB) of Dictyostelium discoideum (Social amoeba).